We begin with the raw amino-acid sequence, 598 residues long: Membrane protein insertase YidC (598 aa).

Residues 7–27 form a helical membrane-spanning segment; sequence NYFIAIALSVLIVLGWQFLYM. The disordered stretch occupies residues 37 to 71; the sequence is AQEAQKAQQQTEQVQQPAAGGATPAPASGTAPSGQ. A compositionally biased stretch (low complexity) spans 40-71; it reads AQKAQQQTEQVQQPAAGGATPAPASGTAPSGQ. 4 helical membrane passes run 373–393, 447–467, 492–512, and 538–558; these read FFGN…ALFF, WPVA…YITI, LFGL…WPLI, and WMPL…VIYW.

It belongs to the OXA1/ALB3/YidC family. Type 1 subfamily. As to quaternary structure, interacts with the Sec translocase complex via SecD. Specifically interacts with transmembrane segments of nascent integral membrane proteins during membrane integration.

Its subcellular location is the cell inner membrane. Required for the insertion and/or proper folding and/or complex formation of integral membrane proteins into the membrane. Involved in integration of membrane proteins that insert both dependently and independently of the Sec translocase complex, as well as at least some lipoproteins. Aids folding of multispanning membrane proteins. In Rhizobium etli (strain CIAT 652), this protein is Membrane protein insertase YidC.